We begin with the raw amino-acid sequence, 251 residues long: uncharacterized protein (251 aa).

Positions 21 to 246 constitute an AMMECR1 domain; the sequence is KGSSPFAFYA…ITYEEFNKQL (226 aa).

This is an uncharacterized protein from Saccharomyces cerevisiae (strain ATCC 204508 / S288c) (Baker's yeast).